A 499-amino-acid chain; its full sequence is Nucleoside transporter 2 (499 aa).

Residues 1-30 (MTGQSAAVEGSNSALPWYRMGFHTLAEFNT) are Cytoplasmic-facing. The next 5 membrane-spanning stretches (helical) occupy residues 31 to 51 (YVTF…VTSA), 112 to 132 (LFLG…VPAA), 133 to 153 (TIPT…MGGL), 179 to 199 (WGLT…QVSM), and 212 to 232 (IYFG…VLLR). Residues 255–267 (VEPEESQDSKEPA) show a composition bias toward basic and acidic residues. The interval 255–276 (VEPEESQDSKEPATGDVAEAPK) is disordered. N-linked (GlcNAc...) asparagine glycosylation occurs at Asn326. The next 5 helical transmembrane spans lie at 350–370 (LCAF…FFLV), 378–398 (MTII…LLMI), 406–426 (KLVI…VLCV), 428–448 (GFIP…LTNG), and 475–495 (MLAG…SLAI).

The protein belongs to the SLC29A/ENT transporter (TC 2.A.57) family.

It is found in the cell membrane. Its subcellular location is the cell projection. The protein localises to the cilium. It localises to the flagellum. It catalyses the reaction inosine(in) + H(+)(in) = inosine(out) + H(+)(out). The enzyme catalyses guanosine(in) + H(+)(in) = guanosine(out) + H(+)(out). The catalysed reaction is xanthosine(in) + H(+)(in) = xanthosine(out) + H(+)(out). High affinity nucleoside:H(+) symporter; transports inosine and guanosine. Can transport xanthosine. The polypeptide is Nucleoside transporter 2 (Leishmania donovani).